We begin with the raw amino-acid sequence, 288 residues long: ATP phosphoribosyltransferase (288 aa).

The protein belongs to the ATP phosphoribosyltransferase family. Long subfamily. The cofactor is Mg(2+).

Its subcellular location is the cytoplasm. The catalysed reaction is 1-(5-phospho-beta-D-ribosyl)-ATP + diphosphate = 5-phospho-alpha-D-ribose 1-diphosphate + ATP. The protein operates within amino-acid biosynthesis; L-histidine biosynthesis; L-histidine from 5-phospho-alpha-D-ribose 1-diphosphate: step 1/9. With respect to regulation, feedback inhibited by histidine. In terms of biological role, catalyzes the condensation of ATP and 5-phosphoribose 1-diphosphate to form N'-(5'-phosphoribosyl)-ATP (PR-ATP). Has a crucial role in the pathway because the rate of histidine biosynthesis seems to be controlled primarily by regulation of HisG enzymatic activity. The chain is ATP phosphoribosyltransferase from Methanococcus maripaludis (strain C7 / ATCC BAA-1331).